The primary structure comprises 512 residues: Ankyrin repeat domain-containing protein SOWAHC (512 aa).

Phosphoserine occurs at positions 82 and 125. Residues 126–248 are disordered; that stretch reads LGLGGEVSDQ…AEEESSVGAS (123 aa). Residues 173-186 are compositionally biased toward low complexity; the sequence is PPQGEAEGGSSPSG. The residue at position 205 (serine 205) is a Phosphoserine. The segment covering 214–228 has biased composition (gly residues); sequence PGDGNAGGRSRGGGD. The segment covering 229–248 has biased composition (low complexity); sequence SDTASLASSSAEEESSVGAS. ANK repeat units follow at residues 288–317 and 327–357; these read TGFT…KHQL and GGYT…DVDI. Arginine 395 bears the Omega-N-methylarginine mark. A disordered region spans residues 427–500; that stretch reads HVPEGWTGGS…EERSLRGYSS (74 aa). The segment covering 453-462 has biased composition (basic residues); sequence MKPRLNKIRF. Over residues 481–492 the composition is skewed to acidic residues; the sequence is EEGEEEEEEEEE.

Belongs to the SOWAH family.

This Mus musculus (Mouse) protein is Ankyrin repeat domain-containing protein SOWAHC (Sowahc).